We begin with the raw amino-acid sequence, 391 residues long: Nucleosome assembly protein 1-like 1 (391 aa).

The segment covering 1–10 (MADIDNKEQS) has biased composition (basic and acidic residues). Positions 1–32 (MADIDNKEQSELDQDLDDVEEVEEEETGEETK) are disordered. Position 2 is an N-acetylalanine (A2). S10 carries the phosphoserine modification. A compositionally biased stretch (acidic residues) spans 11 to 28 (ELDQDLDDVEEVEEEETG). A phosphothreonine mark is found at T62 and T64. Position 69 is a phosphoserine (S69). N6-acetyllysine is present on K116. The NAP1L motif motif lies at 125-150 (YEPTEEECEWKPDEEDEISEELKEKA). Residues 132–143 (CEWKPDEEDEIS) show a composition bias toward acidic residues. The interval 132–163 (CEWKPDEEDEISEELKEKAKIEDEKKDEEKED) is disordered. A Phosphoserine modification is found at S143. The span at 144 to 163 (EELKEKAKIEDEKKDEEKED) shows a compositional bias: basic and acidic residues. Residues 273–279 (IKKKQKH) carry the Nuclear localization signal motif. Acidic residues predominate over residues 346-376 (AIEDDDDDYDEEGEEADEEGEEEGDEENDPD). The tract at residues 346–391 (AIEDDDDDYDEEGEEADEEGEEEGDEENDPDYDPKKDQNPAECKQQ) is disordered. 5-glutamyl polyglycine is present on residues E359 and E360. Positions 377-391 (YDPKKDQNPAECKQQ) are enriched in basic and acidic residues. At C388 the chain carries Cysteine methyl ester. C388 is lipidated: S-farnesyl cysteine. Residues 389–391 (KQQ) constitute a propeptide, removed in mature form.

The protein belongs to the nucleosome assembly protein (NAP) family. As to quaternary structure, homodimer. The dimer binds strongly and sequentially to single and double H2A-H2B heterodimers. Interacts with ERCC6; this interaction increases ERCC6 processivity. Interacts with RAD54. Interacts with SETD1A. Post-translationally, polyglycylated by TTLL10 on glutamate residues, resulting in polyglycine chains on the gamma-carboxyl group. Both polyglutamylation and polyglycylation modifications can coexist on the same protein on adjacent residues, and lowering polyglycylation levels increases polyglutamylation, and reciprocally. Polyglutamylated by TTLL4 on glutamate residues, resulting in polyglutamate chains on the gamma-carboxyl group. Both polyglutamylation and polyglycylation modifications can coexist on the same protein on adjacent residues, and lowering polyglycylation levels increases polyglutamylation, and reciprocally.

Its subcellular location is the nucleus. It localises to the melanosome. The protein localises to the cytoplasm. Its function is as follows. Histone chaperone that plays a role in the nuclear import of H2A-H2B and nucleosome assembly. Also participates in several important DNA repair mechanisms: greatly enhances ERCC6-mediated chromatin remodeling which is essential for transcription-coupled nucleotide excision DNA repair. Also stimulates homologous recombination (HR) by RAD51 and RAD54 which is essential in mitotic DNA double strand break (DSB) repair. Plays a key role in the regulation of embryonic neurogenesis. Promotes the proliferation of neural progenitors and inhibits neuronal differentiation during cortical development. Regulates neurogenesis via the modulation of RASSF10; regulates RASSF10 expression by promoting SETD1A-mediated H3K4 methylation at the RASSF10 promoter. In Pongo abelii (Sumatran orangutan), this protein is Nucleosome assembly protein 1-like 1 (NAP1L1).